An 820-amino-acid polypeptide reads, in one-letter code: Probable protease Ga0182885_104520 (820 aa).

It belongs to the peptidase C25 family.

Its function is as follows. Probably a dedicated protease for substrate gasdermin bGSDM; cleaves the bGSDM precursor, releasing the pore-forming moiety, which integrates into the membrane and triggers cell death. Involved in defense against bacteriophages. Expression of bacterial gasdermin (bGSDM) and this neighboring protease is toxic in E.coli. This Desulfuromonadales bacterium protein is Probable protease Ga0182885_104520.